Reading from the N-terminus, the 274-residue chain is Large ribosomal subunit protein uL2 (274 aa).

Residues 224 to 254 (AMNPVDHPHGGGEGRTGEGQAPVSPWNTLTK) are disordered. Residues 229-239 (DHPHGGGEGRT) are compositionally biased toward basic and acidic residues.

The protein belongs to the universal ribosomal protein uL2 family. Part of the 50S ribosomal subunit. Forms a bridge to the 30S subunit in the 70S ribosome.

One of the primary rRNA binding proteins. Required for association of the 30S and 50S subunits to form the 70S ribosome, for tRNA binding and peptide bond formation. It has been suggested to have peptidyltransferase activity; this is somewhat controversial. Makes several contacts with the 16S rRNA in the 70S ribosome. This is Large ribosomal subunit protein uL2 from Leptothrix cholodnii (strain ATCC 51168 / LMG 8142 / SP-6) (Leptothrix discophora (strain SP-6)).